The chain runs to 361 residues: Probable dual-specificity RNA methyltransferase RlmN (361 aa).

Residue Glu99 is the Proton acceptor of the active site. In terms of domain architecture, Radical SAM core spans 105 to 342 (GPNRMTACVS…VTIRKSYGTP (238 aa)). A disulfide bond links Cys112 and Cys347. The [4Fe-4S] cluster site is built by Cys119, Cys123, and Cys126. Residues 171–172 (GE), Ser204, 227–229 (SLH), and Asn304 contribute to the S-adenosyl-L-methionine site. The S-methylcysteine intermediate role is filled by Cys347.

It belongs to the radical SAM superfamily. RlmN family. It depends on [4Fe-4S] cluster as a cofactor.

Its subcellular location is the cytoplasm. It catalyses the reaction adenosine(2503) in 23S rRNA + 2 reduced [2Fe-2S]-[ferredoxin] + 2 S-adenosyl-L-methionine = 2-methyladenosine(2503) in 23S rRNA + 5'-deoxyadenosine + L-methionine + 2 oxidized [2Fe-2S]-[ferredoxin] + S-adenosyl-L-homocysteine. The catalysed reaction is adenosine(37) in tRNA + 2 reduced [2Fe-2S]-[ferredoxin] + 2 S-adenosyl-L-methionine = 2-methyladenosine(37) in tRNA + 5'-deoxyadenosine + L-methionine + 2 oxidized [2Fe-2S]-[ferredoxin] + S-adenosyl-L-homocysteine. In terms of biological role, specifically methylates position 2 of adenine 2503 in 23S rRNA and position 2 of adenine 37 in tRNAs. The polypeptide is Probable dual-specificity RNA methyltransferase RlmN (Chlorobium luteolum (strain DSM 273 / BCRC 81028 / 2530) (Pelodictyon luteolum)).